The sequence spans 39 residues: Photosystem II reaction center protein L (39 aa).

A helical transmembrane segment spans residues 18–38 (SLYLGLLLVFVTGVLFSSYFF).

Belongs to the PsbL family. In terms of assembly, PSII is composed of 1 copy each of membrane proteins PsbA, PsbB, PsbC, PsbD, PsbE, PsbF, PsbH, PsbI, PsbJ, PsbK, PsbL, PsbM, PsbT, PsbX, PsbY, PsbZ, Psb30/Ycf12, at least 3 peripheral proteins of the oxygen-evolving complex and a large number of cofactors. It forms dimeric complexes.

The protein localises to the plastid. Its subcellular location is the organellar chromatophore thylakoid membrane. One of the components of the core complex of photosystem II (PSII). PSII is a light-driven water:plastoquinone oxidoreductase that uses light energy to abstract electrons from H(2)O, generating O(2) and a proton gradient subsequently used for ATP formation. It consists of a core antenna complex that captures photons, and an electron transfer chain that converts photonic excitation into a charge separation. This subunit is found at the monomer-monomer interface and is required for correct PSII assembly and/or dimerization. The chain is Photosystem II reaction center protein L from Paulinella chromatophora.